The sequence spans 101 residues: Trp operon repressor homolog (101 aa).

The DNA-binding element occupies 59–82 (QREIAQKYGVSIAQITRGSNALKA).

This sequence belongs to the TrpR family. Homodimer.

Its subcellular location is the cytoplasm. Functionally, this protein is an aporepressor. When complexed with L-tryptophan it binds the operator region of the trp operon and prevents the initiation of transcription. The protein is Trp operon repressor homolog of Chlamydia caviae (strain ATCC VR-813 / DSM 19441 / 03DC25 / GPIC) (Chlamydophila caviae).